The primary structure comprises 568 residues: Methionine--tRNA ligase (568 aa).

Positions 10-20 (PYVQSVPHLGN) match the 'HIGH' region motif. 4 residues coordinate Zn(2+): cysteine 143, cysteine 146, cysteine 156, and cysteine 159. The 'KMSKS' region motif lies at 333–337 (KFSKS). An ATP-binding site is contributed by lysine 336.

Belongs to the class-I aminoacyl-tRNA synthetase family. MetG type 1 subfamily. The cofactor is Zn(2+).

The protein resides in the cytoplasm. It carries out the reaction tRNA(Met) + L-methionine + ATP = L-methionyl-tRNA(Met) + AMP + diphosphate. Is required not only for elongation of protein synthesis but also for the initiation of all mRNA translation through initiator tRNA(fMet) aminoacylation. This chain is Methionine--tRNA ligase, found in Metallosphaera sedula (strain ATCC 51363 / DSM 5348 / JCM 9185 / NBRC 15509 / TH2).